The sequence spans 319 residues: Cytochrome f (319 aa).

The signal sequence occupies residues 1–35; it reads MQNRNISYWIKKCVIQSISIVILMKIIAWPSISEA. The heme site is built by tyrosine 36, cysteine 56, cysteine 59, and histidine 60. The helical transmembrane segment at 285–305 threads the bilayer; sequence VQSLLVFFVSVTLAQIFLVLK.

This sequence belongs to the cytochrome f family. The 4 large subunits of the cytochrome b6-f complex are cytochrome b6, subunit IV (17 kDa polypeptide, petD), cytochrome f and the Rieske protein, while the 4 small subunits are PetG, PetL, PetM and PetN. The complex functions as a dimer. Requires heme as cofactor.

Its subcellular location is the plastid. The protein localises to the chloroplast thylakoid membrane. Functionally, component of the cytochrome b6-f complex, which mediates electron transfer between photosystem II (PSII) and photosystem I (PSI), cyclic electron flow around PSI, and state transitions. The protein is Cytochrome f of Physcomitrium patens (Spreading-leaved earth moss).